Here is a 165-residue protein sequence, read N- to C-terminus: MSLPEKAFPVSWDQFHRDARALAWRLAGTNGRWQAIVCITRGGLVPAAVIARELGIRLIETVCIASYHDYSEQGELKVLKEISPSLLEEDGQNILIVDDLTDTGKTAAIVRAMMPKAHFATVYAKPKGRPLVDTFVTEVSQDTWIYFPWDLGFSYQKPIADGEIG.

5-phospho-alpha-D-ribose 1-diphosphate is bound by residues 41–42 and 98–106; these read RG and DDLTDTGKT. Residue D99 coordinates Mg(2+). Positions 102 and 145 each coordinate guanine. Xanthine-binding residues include D102 and I145. Residues 102–106 and 144–145 contribute to the GMP site; these read DTGKT and WI.

The protein belongs to the purine/pyrimidine phosphoribosyltransferase family. XGPT subfamily. As to quaternary structure, homotetramer. Mg(2+) is required as a cofactor.

The protein resides in the cell inner membrane. It catalyses the reaction GMP + diphosphate = guanine + 5-phospho-alpha-D-ribose 1-diphosphate. The enzyme catalyses XMP + diphosphate = xanthine + 5-phospho-alpha-D-ribose 1-diphosphate. It carries out the reaction IMP + diphosphate = hypoxanthine + 5-phospho-alpha-D-ribose 1-diphosphate. Its pathway is purine metabolism; GMP biosynthesis via salvage pathway; GMP from guanine: step 1/1. It participates in purine metabolism; XMP biosynthesis via salvage pathway; XMP from xanthine: step 1/1. Purine salvage pathway enzyme that catalyzes the transfer of the ribosyl-5-phosphate group from 5-phospho-alpha-D-ribose 1-diphosphate (PRPP) to the N9 position of the 6-oxopurines guanine and xanthine to form the corresponding ribonucleotides GMP (guanosine 5'-monophosphate) and XMP (xanthosine 5'-monophosphate), with the release of PPi. To a lesser extent, also acts on hypoxanthine. The polypeptide is Xanthine-guanine phosphoribosyltransferase (Chelativorans sp. (strain BNC1)).